Reading from the N-terminus, the 171-residue chain is S-ribosylhomocysteine lyase (171 aa).

Positions 54, 58, and 128 each coordinate Fe cation.

Belongs to the LuxS family. As to quaternary structure, homodimer. The cofactor is Fe cation.

The enzyme catalyses S-(5-deoxy-D-ribos-5-yl)-L-homocysteine = (S)-4,5-dihydroxypentane-2,3-dione + L-homocysteine. In terms of biological role, involved in the synthesis of autoinducer 2 (AI-2) which is secreted by bacteria and is used to communicate both the cell density and the metabolic potential of the environment. The regulation of gene expression in response to changes in cell density is called quorum sensing. Catalyzes the transformation of S-ribosylhomocysteine (RHC) to homocysteine (HC) and 4,5-dihydroxy-2,3-pentadione (DPD). The chain is S-ribosylhomocysteine lyase from Salmonella typhi.